The primary structure comprises 404 residues: Trigger factor (404 aa).

The 66-residue stretch at 160-225 (KDHLFVRTEE…VLEVKTLKLP (66 aa)) folds into the PPIase FKBP-type domain.

This sequence belongs to the FKBP-type PPIase family. Tig subfamily.

The protein localises to the cytoplasm. The enzyme catalyses [protein]-peptidylproline (omega=180) = [protein]-peptidylproline (omega=0). Its function is as follows. Involved in protein export. Acts as a chaperone by maintaining the newly synthesized protein in an open conformation. Functions as a peptidyl-prolyl cis-trans isomerase. This chain is Trigger factor, found in Thermus thermophilus (strain ATCC BAA-163 / DSM 7039 / HB27).